Reading from the N-terminus, the 488-residue chain is uncharacterized protein (488 aa).

This sequence belongs to the protein kinase superfamily. ADCK protein kinase family.

This is an uncharacterized protein from Mycobacterium tuberculosis (strain CDC 1551 / Oshkosh).